The following is a 180-amino-acid chain: Thebaine synthase 1 (180 aa).

Ser96 provides a ligand contact to thebaine. His111 serves as the catalytic Proton acceptor. Residue Thr127 coordinates thebaine.

This sequence belongs to the MLP family. In terms of assembly, homodimer (allosteric) and oligomers. Expressed in poppy latex.

It carries out the reaction (7S)-O-acetylsalutaridinol = thebaine + acetate + H(+). It participates in alkaloid biosynthesis; morphine biosynthesis. Functionally, catalyzes the formation of thebaine from (7S)-salutaridinol 7-O-acetate at the expense of labile hydroxylated by-products, which are preferentially produced by spontaneous allylic elimination. This chain is Thebaine synthase 1, found in Papaver somniferum (Opium poppy).